The primary structure comprises 893 residues: DNA mismatch repair protein MutS (893 aa).

631 to 638 (GPNMAGKS) lines the ATP pocket. The segment at 821–858 (AGRPRVAVRQPQGGRRGASTGQLGLFGMEPAQGGTGVT) is disordered.

Belongs to the DNA mismatch repair MutS family.

Functionally, this protein is involved in the repair of mismatches in DNA. It is possible that it carries out the mismatch recognition step. This protein has a weak ATPase activity. This chain is DNA mismatch repair protein MutS, found in Myxococcus xanthus (strain DK1622).